A 145-amino-acid polypeptide reads, in one-letter code: Large ribosomal subunit protein uL16 (145 aa).

The protein belongs to the universal ribosomal protein uL16 family. Part of the 50S ribosomal subunit.

Its function is as follows. Binds 23S rRNA and is also seen to make contacts with the A and possibly P site tRNAs. The protein is Large ribosomal subunit protein uL16 of Desulfitobacterium hafniense (strain DSM 10664 / DCB-2).